The sequence spans 1273 residues: Lysine-specific histone demethylase 2 (1273 aa).

A compositionally biased stretch (polar residues) spans 199–230; it reads ENFFDANSPSSQQFPSTYPSRSQNPLSSSGDG. Residues 199–237 form a disordered region; it reads ENFFDANSPSSQQFPSTYPSRSQNPLSSSGDGSTAIHAG. A coiled-coil region spans residues 247 to 307; sequence FSNYPYPLDA…LSKSVDNAVL (61 aa). An SWIRM domain is found at 394-490; that stretch reads AAEAARKCNL…YGCLSFDSSF (97 aa). Residues 509–551, T517, E550, R558, and 572–573 each bind FAD; these read IAVV…ILEA and TQ. Positions 542–1198 are demethylase activity; that stretch reads LPPKVIILEA…GKILRYQRLT (657 aa). Positions 571 to 596 are disordered; that stretch reads ATQINHHTSNSNSISSNSTSLNPKDV. The span at 574–590 shows a compositional bias: low complexity; sequence INHHTSNSNSISSNSTS. Residues 681–767 adopt a coiled-coil conformation; sequence SVRISWISQF…NTVDTDFSKD (87 aa). Positions 1115-1195 form a DNA-binding region, HMG box; the sequence is SKPNANPFLL…AYAGKILRYQ (81 aa). FAD-binding positions include D1147 and 1156-1157; that span reads ET. Residues 1215–1273 form a disordered region; it reads KCQDEPIPDDEARLFMQAQREEEQRKQTQDDNISKSREASDEEYHDDGSSDSGYNGTRY. The segment covering 1233–1253 has biased composition (basic and acidic residues); that stretch reads QREEEQRKQTQDDNISKSREA. Polar residues predominate over residues 1264–1273; it reads SDSGYNGTRY.

It belongs to the flavin monoamine oxidase family. In terms of assembly, component of the SWM histone demethylase complex composed of at least lsd1, lsd2, phf1 and phf2. Interacts directly with lsd1. It depends on FAD as a cofactor.

It is found in the nucleus. In terms of biological role, catalytic component of the SWM histone demethylase complex that specifically demethylates H3K9me2, a specific tag for epigenetic transcriptional activation, thereby acting as a corepressor. Acts by oxidizing the substrate by FAD to generate the corresponding imine that is subsequently hydrolyzed. Has a role in regulating heterochromatin propagation and euchromatic transcription. Also has a gene activating role. In Schizosaccharomyces pombe (strain 972 / ATCC 24843) (Fission yeast), this protein is Lysine-specific histone demethylase 2 (lsd2).